Here is a 155-residue protein sequence, read N- to C-terminus: uncharacterized protein (155 aa).

Residues 1-14 (MLTLSGWITTQVPP) show a composition bias toward polar residues. The segment at 1–44 (MLTLSGWITTQVPPSSRAAADAKAARTGTAEQAEDPAAGTDAAD) is disordered. Positions 17-30 (RAAADAKAARTGTA) are enriched in low complexity.

This is an uncharacterized protein from Pseudomonas aeruginosa (strain ATCC 15692 / DSM 22644 / CIP 104116 / JCM 14847 / LMG 12228 / 1C / PRS 101 / PAO1).